Here is a 70-residue protein sequence, read N- to C-terminus: Small ribosomal subunit protein bS21 (70 aa).

Belongs to the bacterial ribosomal protein bS21 family.

This chain is Small ribosomal subunit protein bS21, found in Azoarcus sp. (strain BH72).